A 140-amino-acid chain; its full sequence is UPF0654 protein C22G7.11c (140 aa).

Disordered regions lie at residues 1–88 (MPDP…DPMK) and 110–140 (YKATMHNPNVSKQAKTRAQRALEEIDDETQA). Residues 24 to 33 (AKERAEDYIE) are compositionally biased toward basic and acidic residues. Positions 34–44 (SHSSGQETGDY) are enriched in polar residues. Over residues 54–71 (DYEDLGDYDEDADFDNEE) the composition is skewed to acidic residues.

The protein belongs to the UPF0654 (con-6) family.

This chain is UPF0654 protein C22G7.11c, found in Schizosaccharomyces pombe (strain 972 / ATCC 24843) (Fission yeast).